Consider the following 221-residue polypeptide: Putative endonuclease segB (221 aa).

The GIY-YIG domain occupies 1–84 (MFYYTYKITN…FLNRPDVYNL (84 aa)).

It to endonucleases of group I introns of fungi and phage. The cofactor is Mg(2+).

Its function is as follows. Probably involved in the movement of the endonuclease-encoding DNA. The polypeptide is Putative endonuclease segB (segB) (Enterobacteria phage T4 (Bacteriophage T4)).